A 362-amino-acid chain; its full sequence is Methionine import ATP-binding protein MetN (362 aa).

In terms of domain architecture, ABC transporter spans 2-241 (IHIKNLSKTY…PQHDVTRAMV (240 aa)). 38 to 45 (GPSGAGKS) provides a ligand contact to ATP.

Belongs to the ABC transporter superfamily. Methionine importer (TC 3.A.1.24) family. The complex is composed of two ATP-binding proteins (MetN), two transmembrane proteins (MetI) and a solute-binding protein (MetQ).

The protein resides in the cell inner membrane. The catalysed reaction is L-methionine(out) + ATP + H2O = L-methionine(in) + ADP + phosphate + H(+). The enzyme catalyses D-methionine(out) + ATP + H2O = D-methionine(in) + ADP + phosphate + H(+). Functionally, part of the ABC transporter complex MetNIQ involved in methionine import. Responsible for energy coupling to the transport system. This Bordetella avium (strain 197N) protein is Methionine import ATP-binding protein MetN.